Consider the following 185-residue polypeptide: Shikimate kinase (185 aa).

ATP is bound at residue 12–17; sequence GSGKTT. T16 is a binding site for Mg(2+). Positions 34, 58, and 79 each coordinate substrate. An ATP-binding site is contributed by R116. R135 is a binding site for substrate.

The protein belongs to the shikimate kinase family. In terms of assembly, monomer. Mg(2+) serves as cofactor.

Its subcellular location is the cytoplasm. The catalysed reaction is shikimate + ATP = 3-phosphoshikimate + ADP + H(+). The protein operates within metabolic intermediate biosynthesis; chorismate biosynthesis; chorismate from D-erythrose 4-phosphate and phosphoenolpyruvate: step 5/7. Functionally, catalyzes the specific phosphorylation of the 3-hydroxyl group of shikimic acid using ATP as a cosubstrate. The protein is Shikimate kinase of Corynebacterium jeikeium (strain K411).